The following is a 129-amino-acid chain: Fluoride-specific ion channel FluC (129 aa).

4 helical membrane-spanning segments follow: residues 4–24, 30–50, 63–83, and 95–115; these read VLIV…LGEW, GFPT…GWLL, WSLL…TFSV, and IVAS…AYIG. Na(+)-binding residues include glycine 73 and threonine 76.

This sequence belongs to the fluoride channel Fluc/FEX (TC 1.A.43) family.

It localises to the cell membrane. It carries out the reaction fluoride(in) = fluoride(out). Na(+) is not transported, but it plays an essential structural role and its presence is essential for fluoride channel function. In terms of biological role, fluoride-specific ion channel. Important for reducing fluoride concentration in the cell, thus reducing its toxicity. This Oceanobacillus iheyensis (strain DSM 14371 / CIP 107618 / JCM 11309 / KCTC 3954 / HTE831) protein is Fluoride-specific ion channel FluC.